A 239-amino-acid polypeptide reads, in one-letter code: Large ribosomal subunit protein uL1 (239 aa).

Belongs to the universal ribosomal protein uL1 family. In terms of assembly, part of the 50S ribosomal subunit.

In terms of biological role, binds directly to 23S rRNA. The L1 stalk is quite mobile in the ribosome, and is involved in E site tRNA release. Functionally, protein L1 is also a translational repressor protein, it controls the translation of the L11 operon by binding to its mRNA. In Rickettsia africae (strain ESF-5), this protein is Large ribosomal subunit protein uL1.